We begin with the raw amino-acid sequence, 2551 residues long: Probable polyketide synthase 13 (2551 aa).

Positions 10-434 (ENDVAIIGIG…GSNCCLILSQ (425 aa)) constitute a Ketosynthase family 3 (KS3) domain. Residues cysteine 176, histidine 317, and histidine 358 each act as for beta-ketoacyl synthase activity in the active site. Residues 621–654 (GIEVSFIIGHSLGEIPAAYCSGMINIDTLCYLIY) form an acyl/malonyl transferase region. Catalysis depends on serine 631, which acts as the For acyl/malonyl transferase activity. An N-terminal hotdog fold region spans residues 928–1057 (TDNLGYLNEN…GDFQLSNHSS (130 aa)). One can recognise a PKS/mFAS DH domain in the interval 928-1226 (TDNLGYLNEN…CTSLTPIKES (299 aa)). Catalysis depends on histidine 961, which acts as the Proton acceptor; for dehydratase activity. Positions 1076 to 1226 (NLTKLSRDEL…CTSLTPIKES (151 aa)) are C-terminal hotdog fold. Aspartate 1136 (proton donor; for dehydratase activity) is an active-site residue. In terms of domain architecture, Carrier spans 2465–2542 (DCQTIIKDSF…SSIQYTINSF (78 aa)). The residue at position 2502 (serine 2502) is an O-(pantetheine 4'-phosphoryl)serine.

The cofactor is pantetheine 4'-phosphate.

Its function is as follows. Probable polyketide synthase. The chain is Probable polyketide synthase 13 (pks13) from Dictyostelium discoideum (Social amoeba).